Here is a 244-residue protein sequence, read N- to C-terminus: Putative lipoprotein LprA (244 aa).

An N-terminal signal peptide occupies residues 1–24 (MKHPPCSVVAAATAILAVVLAIGG). Cysteine 25 is lipidated: N-palmitoyl cysteine. Residue cysteine 25 is the site of S-diacylglycerol cysteine attachment.

This sequence belongs to the LppX/LprAFG lipoprotein family.

It localises to the cell membrane. The sequence is that of Putative lipoprotein LprA (lprA) from Mycobacterium tuberculosis (strain CDC 1551 / Oshkosh).